The chain runs to 1010 residues: MGDKDDRFPKKKKGGTKDMDALKKEVPITEHKMSVEEVCRKFQTDVVQGLTNAKAAEFLLRDGPNALTPPPTTPEWVKFCRQLFGGFSILLWTGAILCFLAYAIQAATEDEPAGDNLYLGIVLTAVVVITGCFSYFQEAKSSKIMESFKNMVPQQALVIREGEKVQVNAEEVMAGDLIEVKGGDRIPADIRVTSAHGCKVDNSSLTGESEPQSRSPDCTHDNPLETRNIAFFSTNCVEGTARGIVICTGDRTVMGRIATLTSGLETGKTPIAVEIEHFIHIITGVAVFLGVTFFILAIILGYTWLKAVIFLIGIIVANVPEGLLATVTVCLTLTAKRMAKKNCLVKNLEAVETLGSTSTICSDKTGTLTQNRMTVAHMWFDNQIHEADTTEDQSGAAFDKSSVTWLSLSRVAPLCNRAQFKPRQDSVSILKRDVAGDASESALLKCIELSCGSVRMMRDKNKKVAEIPFNPTNKYQLSIHETEDPNDNRYLLVMKGALERILDRCSTIMLQGKEQPMDEEMKEAFQNAYMELGGLGERVLGFRHLLLPEDQYPKGFAFDTDDVNFQTDNLCFVGLMSMIDPPRAAVPDAVGKCRSAGIKVIMVTGDHPITAKAIAKGVGIISEGNETVEDIAARLNIPVSQVNPRDAKACVIHGSDLKDLSQDQMDDILRNHTEIVFARTSPQQKLIIVEGCQRLGAIVAVTGDGVNDSPALKKADIGVAMGISGSDVSKQAADMILLDDNFASIVTGVEEGRLIFDNLKKSIAYTLTSNIPEITPFLFFIIVNIPLALGTITILCIDLGTDMGSAISLAYETAESDIMKRQPRNPCRDKLVNERLISIAYGQIGMIQALGGFFSYFVILAENGFLPSQLVGIRLNWDDRSLNDLEDSYGQQWTYEQRKIVEFTCHTAFFVSIVVVQWADLIICKTRRNSVFQQGMKNKILIFGLFEETALAAFLSYCPGMDVALRMYPLKPTWWFWAFPYSFLIFVYDEARKLILCRNPGGWVEKETYY.

Positions 1–21 (MGDKDDRFPKKKKGGTKDMDA) are disordered. The Cytoplasmic segment spans residues 1–74 (MGDKDDRFPK…NALTPPPTTP (74 aa)). The interval 69–71 (PPP) is interaction with phosphoinositide-3 kinase. A helical transmembrane segment spans residues 75-95 (EWVKFCRQLFGGFSILLWTGA). Topologically, residues 96 to 118 (ILCFLAYAIQAATEDEPAGDNLY) are extracellular. Residues 119 to 139 (LGIVLTAVVVITGCFSYFQEA) traverse the membrane as a helical segment. The Cytoplasmic segment spans residues 140 to 275 (KSSKIMESFK…TGKTPIAVEI (136 aa)). Residues 201-216 (DNSSLTGESEPQSRSP) are compositionally biased toward polar residues. The tract at residues 201–221 (DNSSLTGESEPQSRSPDCTHD) is disordered. A helical membrane pass occupies residues 276-295 (EHFIHIITGVAVFLGVTFFI). Residues 296–307 (LAIILGYTWLKA) lie on the Extracellular side of the membrane. The helical transmembrane segment at 308–325 (VIFLIGIIVANVPEGLLA) threads the bilayer. Residues 326-759 (TVTVCLTLTA…EEGRLIFDNL (434 aa)) lie on the Cytoplasmic side of the membrane. The active-site 4-aspartylphosphate intermediate is the Asp363. Residues Asp704 and Asp708 each coordinate Mg(2+). The helical transmembrane segment at 760-779 (KKSIAYTLTSNIPEITPFLF) threads the bilayer. Residues 780–789 (FIIVNIPLAL) lie on the Extracellular side of the membrane. A helical membrane pass occupies residues 790-810 (GTITILCIDLGTDMGSAISLA). Residues 811–830 (YETAESDIMKRQPRNPCRDK) are Cytoplasmic-facing. The helical transmembrane segment at 831–853 (LVNERLISIAYGQIGMIQALGGF) threads the bilayer. Residues 854–905 (FSYFVILAENGFLPSQLVGIRLNWDDRSLNDLEDSYGQQWTYEQRKIVEFTC) lie on the Extracellular side of the membrane. Residues 906-925 (HTAFFVSIVVVQWADLIICK) form a helical membrane-spanning segment. Residues 926 to 938 (TRRNSVFQQGMKN) are Cytoplasmic-facing. A Phosphoserine; by PKA modification is found at Ser930. Residues 939–957 (KILIFGLFEETALAAFLSY) form a helical membrane-spanning segment. Over 958–972 (CPGMDVALRMYPLKP) the chain is Extracellular. A helical transmembrane segment spans residues 973–993 (TWWFWAFPYSFLIFVYDEARK). At 994–1010 (LILCRNPGGWVEKETYY) the chain is on the cytoplasmic side.

The protein belongs to the cation transport ATPase (P-type) (TC 3.A.3) family. Type IIC subfamily. In terms of assembly, the sodium/potassium-transporting ATPase is composed of a catalytic alpha subunit, an auxiliary non-catalytic beta subunit and an additional regulatory subunit.

It localises to the cell membrane. It catalyses the reaction K(+)(out) + Na(+)(in) + ATP + H2O = K(+)(in) + Na(+)(out) + ADP + phosphate + H(+). Its function is as follows. This is the catalytic component of the active enzyme, which catalyzes the hydrolysis of ATP coupled with the exchange of sodium and potassium ions across the plasma membrane. This action creates the electrochemical gradient of sodium and potassium ions, providing the energy for active transport of various nutrients. This is Sodium/potassium-transporting ATPase subunit alpha-3 (atp1a3) from Oreochromis mossambicus (Mozambique tilapia).